The primary structure comprises 315 residues: Calumenin (315 aa).

A signal peptide spans 1-19 (MDLRQFLMCLSLCTAFALS). At S44 the chain carries Phosphoserine. Y47 is modified (phosphotyrosine). T65 is modified (phosphothreonine). 6 EF-hand domains span residues 68-103 (ESKERLGMIVDKIDADKDGFVTEGELKSWIKHAQKK), 104-139 (YIYDNVENQWQEFDLNQDGLISWDEYRNVTYGTYLD), 151-186 (QMMVRDERRFKMADKDGDLIATKEEFTAFLHPEEYD), 188-223 (MKDIVVQEPMEDIDKNADGFIDLEEYIGDMYSHDGN), 229-264 (WVKTEREQFVEFRDKNRDGKMDKEETKDWILPSDYD), and 265-300 (HAEAEARHLVYESDQNKDGKLTKEEIVDKYDLFVGS). Position 69 is a phosphoserine (S69). Ca(2+) is bound by residues D81, D83, D85, E92, D117, N119, D121, and E128. Residue N131 is glycosylated (N-linked (GlcNAc...) asparagine). D164 is a binding site for Ca(2+). Residue K165 is modified to N6-acetyllysine. Ca(2+)-binding residues include D166, D168, E175, D201, N203, D205, E212, D242, N244, D246, K248, and E253. A Phosphothreonine modification is found at T254. Phosphoserine is present on residues S261 and S277. Ca(2+)-binding residues include D278, N280, D282, K284, and E289. A Prevents secretion from ER motif is present at residues 312–315 (HDEF).

Belongs to the CREC family. Interacts with GGCX.

The protein localises to the endoplasmic reticulum membrane. It localises to the golgi apparatus. Its subcellular location is the secreted. It is found in the melanosome. The protein resides in the sarcoplasmic reticulum lumen. Involved in regulation of vitamin K-dependent carboxylation of multiple N-terminal glutamate residues. Seems to inhibit gamma-carboxylase GGCX. Binds 7 calcium ions with a low affinity. The sequence is that of Calumenin (CALU) from Bos taurus (Bovine).